The primary structure comprises 232 residues: NAD(P)H-quinone oxidoreductase subunit K 1 (232 aa).

[4Fe-4S] cluster-binding residues include Cys49, Cys50, Cys114, and Cys145.

It belongs to the complex I 20 kDa subunit family. NDH-1 can be composed of about 15 different subunits; different subcomplexes with different compositions have been identified which probably have different functions. It depends on [4Fe-4S] cluster as a cofactor.

It localises to the cell inner membrane. It catalyses the reaction a plastoquinone + NADH + (n+1) H(+)(in) = a plastoquinol + NAD(+) + n H(+)(out). It carries out the reaction a plastoquinone + NADPH + (n+1) H(+)(in) = a plastoquinol + NADP(+) + n H(+)(out). Functionally, NDH-1 shuttles electrons from an unknown electron donor, via FMN and iron-sulfur (Fe-S) centers, to quinones in the respiratory and/or the photosynthetic chain. The immediate electron acceptor for the enzyme in this species is believed to be plastoquinone. Couples the redox reaction to proton translocation, and thus conserves the redox energy in a proton gradient. Cyanobacterial NDH-1 also plays a role in inorganic carbon-concentration. This Gloeobacter violaceus (strain ATCC 29082 / PCC 7421) protein is NAD(P)H-quinone oxidoreductase subunit K 1.